Consider the following 252-residue polypeptide: MGRAGFVAGNWKMHGSLVRNQELLDAVVSGTRSLQNVSCVVCVPYPYIAQTQSVLEGSHVLWGGQNVSQYHHGAYTGEVSADMLADLGCRYVIVGHSERRTLFGEGNQVVAEKFRAAQERSITPILCVGETLAQRESDETEQVIAMQLDAVIDLAGIEALGQSVIAYEPVWAIGTGKTATPQQAQDVHKFIRSRIAVHSGGIAENIQILYGGSVKADNARELFTMPDIDGGLIGGASLVAAEFISICLAAQN.

Position 10–12 (10–12 (NWK)) interacts with substrate. The Electrophile role is filled by His-96. Catalysis depends on Glu-168, which acts as the Proton acceptor. Substrate contacts are provided by residues Gly-174, Ser-213, and 234-235 (GG).

It belongs to the triosephosphate isomerase family. Homodimer.

The protein resides in the cytoplasm. The enzyme catalyses D-glyceraldehyde 3-phosphate = dihydroxyacetone phosphate. It functions in the pathway carbohydrate biosynthesis; gluconeogenesis. It participates in carbohydrate degradation; glycolysis; D-glyceraldehyde 3-phosphate from glycerone phosphate: step 1/1. Functionally, involved in the gluconeogenesis. Catalyzes stereospecifically the conversion of dihydroxyacetone phosphate (DHAP) to D-glyceraldehyde-3-phosphate (G3P). This chain is Triosephosphate isomerase, found in Nitrosomonas europaea (strain ATCC 19718 / CIP 103999 / KCTC 2705 / NBRC 14298).